The primary structure comprises 130 residues: Small ribosomal subunit protein uS9 (130 aa).

It belongs to the universal ribosomal protein uS9 family.

The polypeptide is Small ribosomal subunit protein uS9 (Sodalis glossinidius (strain morsitans)).